The sequence spans 437 residues: Phosphoribosylamine--glycine ligase (437 aa).

One can recognise an ATP-grasp domain in the interval 110–322; that stretch reads KNLLRSADIP…LVEVMQAVVD (213 aa). 142 to 203 serves as a coordination point for ATP; sequence EPTDPVNVVV…EERLTGPEVS (62 aa). Residues glutamate 292 and asparagine 294 each contribute to the Mg(2+) site.

Belongs to the GARS family. Requires Mg(2+) as cofactor. The cofactor is Mn(2+).

It carries out the reaction 5-phospho-beta-D-ribosylamine + glycine + ATP = N(1)-(5-phospho-beta-D-ribosyl)glycinamide + ADP + phosphate + H(+). It functions in the pathway purine metabolism; IMP biosynthesis via de novo pathway; N(1)-(5-phospho-D-ribosyl)glycinamide from 5-phospho-alpha-D-ribose 1-diphosphate: step 2/2. This chain is Phosphoribosylamine--glycine ligase, found in Rhodopirellula baltica (strain DSM 10527 / NCIMB 13988 / SH1).